The following is a 494-amino-acid chain: Membrane-bound lytic murein transglycosylase F 1 (494 aa).

The signal sequence occupies residues 1–24 (MRIMAVRLVAGAITLALMAYAWLA). The tract at residues 25–270 (WERARDPEPI…TLLEEHFGHL (246 aa)) is non-LT domain. The interval 271–494 (GRFDYVGFRA…APLPADPPAD (224 aa)) is LT domain. Glutamate 317 is an active-site residue. The disordered stretch occupies residues 464–494 (QVPAGEALGEPPLPTPPAPPGAPLPADPPAD). Pro residues predominate over residues 474–494 (PPLPTPPAPPGAPLPADPPAD).

The protein in the N-terminal section; belongs to the bacterial solute-binding protein 3 family. It in the C-terminal section; belongs to the transglycosylase Slt family.

It localises to the cell outer membrane. The enzyme catalyses Exolytic cleavage of the (1-&gt;4)-beta-glycosidic linkage between N-acetylmuramic acid (MurNAc) and N-acetylglucosamine (GlcNAc) residues in peptidoglycan, from either the reducing or the non-reducing ends of the peptidoglycan chains, with concomitant formation of a 1,6-anhydrobond in the MurNAc residue.. In terms of biological role, murein-degrading enzyme that degrades murein glycan strands and insoluble, high-molecular weight murein sacculi, with the concomitant formation of a 1,6-anhydromuramoyl product. Lytic transglycosylases (LTs) play an integral role in the metabolism of the peptidoglycan (PG) sacculus. Their lytic action creates space within the PG sacculus to allow for its expansion as well as for the insertion of various structures such as secretion systems and flagella. The protein is Membrane-bound lytic murein transglycosylase F 1 of Alkalilimnicola ehrlichii (strain ATCC BAA-1101 / DSM 17681 / MLHE-1).